Consider the following 407-residue polypeptide: Putative D-cysteine desulfhydrase 2, mitochondrial (407 aa).

The transit peptide at 1–34 (MRPSPALAGGGRTVANLLSATEWMLPSPATQVHT) directs the protein to the mitochondrion. A disordered region spans residues 39-72 (PSHSPPSPPHHFAFSNLTTAPKRNGGKGEEEGRP). Position 90 is an N6-(pyridoxal phosphate)lysine (lysine 90).

It belongs to the ACC deaminase/D-cysteine desulfhydrase family. Pyridoxal 5'-phosphate is required as a cofactor.

It localises to the mitochondrion. The catalysed reaction is D-cysteine + H2O = hydrogen sulfide + pyruvate + NH4(+) + H(+). Catalyzes the production of hydrogen sulfide (H2S) from cysteine. This is Putative D-cysteine desulfhydrase 2, mitochondrial from Oryza sativa subsp. japonica (Rice).